The chain runs to 568 residues: Vitamin H transporter 1 (568 aa).

12 helical membrane passes run I85–L105, G123–F143, I158–G178, Y187–Y207, I222–G242, W257–L277, V345–Y365, L384–Y404, F411–A431, G439–C459, V470–T490, and N508–L528. Residues V547–A568 are disordered.

The protein belongs to the major facilitator superfamily. Allantoate permease family.

Its subcellular location is the membrane. Its function is as follows. Involved in uptake of biotin and desthiobiotin with the concomitant entry of protons. This Schizosaccharomyces pombe (strain 972 / ATCC 24843) (Fission yeast) protein is Vitamin H transporter 1 (vht1).